The primary structure comprises 610 residues: Chaperone protein DnaK (610 aa).

The residue at position 173 (threonine 173) is a Phosphothreonine; by autocatalysis. Over residues 579 to 592 the composition is skewed to low complexity; sequence QQQQAQGANAGQNN. The disordered stretch occupies residues 579–610; sequence QQQQAQGANAGQNNDSTVEDAEFKEVKDDDKK. Over residues 599–610 the composition is skewed to basic and acidic residues; that stretch reads AEFKEVKDDDKK.

It belongs to the heat shock protein 70 family.

In terms of biological role, acts as a chaperone. This Staphylococcus aureus (strain bovine RF122 / ET3-1) protein is Chaperone protein DnaK.